Reading from the N-terminus, the 365-residue chain is Methylthioribose-1-phosphate isomerase (365 aa).

D255 acts as the Proton donor in catalysis.

It belongs to the eIF-2B alpha/beta/delta subunits family. MtnA subfamily.

Its subcellular location is the cytoplasm. It is found in the nucleus. The enzyme catalyses 5-(methylsulfanyl)-alpha-D-ribose 1-phosphate = 5-(methylsulfanyl)-D-ribulose 1-phosphate. It functions in the pathway amino-acid biosynthesis; L-methionine biosynthesis via salvage pathway; L-methionine from S-methyl-5-thio-alpha-D-ribose 1-phosphate: step 1/6. Functionally, catalyzes the interconversion of methylthioribose-1-phosphate (MTR-1-P) into methylthioribulose-1-phosphate (MTRu-1-P). The protein is Methylthioribose-1-phosphate isomerase of Drosophila willistoni (Fruit fly).